The chain runs to 213 residues: Large ribosomal subunit protein uL1 (213 aa).

This sequence belongs to the universal ribosomal protein uL1 family. In terms of assembly, part of the 50S ribosomal subunit.

Probably involved in E site tRNA release. Binds directly to 23S rRNA. In terms of biological role, protein L1 is also a translational repressor protein, it controls the translation of the L1 operon by binding to its mRNA. Thus it also controls transcription of L10 and L12 by translational coupling. Unlike the case in E.coli, where the site is in the untranslated mRNA leader, this site is within the L1 protein's structural gene. In Methanococcus vannielii (strain ATCC 35089 / DSM 1224 / JCM 13029 / OCM 148 / SB), this protein is Large ribosomal subunit protein uL1.